Here is a 182-residue protein sequence, read N- to C-terminus: UPF0587 protein YCR090C (182 aa).

Cys36, Cys39, Cys70, and Cys73 together coordinate Zn(2+).

Belongs to the UPF0587 family.

In Saccharomyces cerevisiae (strain ATCC 204508 / S288c) (Baker's yeast), this protein is UPF0587 protein YCR090C.